A 351-amino-acid polypeptide reads, in one-letter code: Transcription elongation factor A N-terminal and central domain-containing protein (351 aa).

In terms of domain architecture, TFIIS N-terminal spans 5-82 (NQIAARASLI…SKWKAVYKQT (78 aa)). Disordered regions lie at residues 86-119 (ARNSPKLFPVRGNKEENSGPSHDPSQNETLGICS) and 144-169 (LKPKEEHFGDGDPESTGKRSSELLDP). Positions 103–119 (SGPSHDPSQNETLGICS) are enriched in polar residues. Positions 145 to 165 (KPKEEHFGDGDPESTGKRSSE) are enriched in basic and acidic residues. The TFIIS central domain maps to 173–289 (MRTKCIELLY…EHYLPQVIDG (117 aa)).

The protein is Transcription elongation factor A N-terminal and central domain-containing protein (TCEANC) of Homo sapiens (Human).